The chain runs to 130 residues: Histone H2B.2 (130 aa).

A compositionally biased stretch (basic and acidic residues) spans 1 to 19 (MAPKAEKKPASKAPAEKKP). The disordered stretch occupies residues 1–38 (MAPKAEKKPASKAPAEKKPAAKKTASTDGAKKRTKARK). Lys7 and Lys8 each carry N6-acetyllysine; alternate. Residues Lys7 and Lys8 each participate in a glycyl lysine isopeptide (Lys-Gly) (interchain with G-Cter in SUMO); alternate cross-link. Ser11 carries the phosphoserine modification. An N6-acetyllysine modification is found at Lys12. Position 17 is an N6-acetyllysine; alternate (Lys17). Lys17 is covalently cross-linked (Glycyl lysine isopeptide (Lys-Gly) (interchain with G-Cter in SUMO); alternate). Lys18 is covalently cross-linked (Glycyl lysine isopeptide (Lys-Gly) (interchain with G-Cter in SUMO)). Lys124 participates in a covalent cross-link: Glycyl lysine isopeptide (Lys-Gly) (interchain with G-Cter in ubiquitin).

The protein belongs to the histone H2B family. The nucleosome is a histone octamer containing two molecules each of H2A, H2B, H3 and H4 assembled in one H3-H4 heterotetramer and two H2A-H2B heterodimers. The octamer wraps approximately 147 bp of DNA. Monoubiquitinated by the UBC2-BRE1 complex to form H2BK123ub1. H2BK123ub1 gives a specific tag for epigenetic transcriptional activation and is also prerequisite for H3K4me and H3K79me formation. H2BK123ub1 also modulates the formation of double-strand breaks during meiosis and is a prerequisite for DNA-damage checkpoint activation. Post-translationally, phosphorylated by STE20 to form H2BS10ph during progression through meiotic prophase. May be correlated with chromosome condensation. In terms of processing, acetylated by GCN5 to form H2BK11ac and H2BK16ac. H2BK16ac can also be formed by ESA1. Acetylation of N-terminal lysines and particularly formation of H2BK11acK16ac has a positive effect on transcription. Sumoylation to form H2BK6su or H2BK7su, and probably also H2BK16su or H2BK17su, occurs preferentially near the telomeres and represses gene transcription.

The protein resides in the nucleus. Its subcellular location is the chromosome. Core component of nucleosome. Nucleosomes wrap and compact DNA into chromatin, limiting DNA accessibility to the cellular machineries which require DNA as a template. Histones thereby play a central role in transcription regulation, DNA repair, DNA replication and chromosomal stability. DNA accessibility is regulated via a complex set of post-translational modifications of histones, also called histone code, and nucleosome remodeling. This chain is Histone H2B.2 (HTB2), found in Candida albicans (strain SC5314 / ATCC MYA-2876) (Yeast).